The chain runs to 577 residues: Arginine--tRNA ligase (577 aa).

Positions 122-132 (PNVAKEMHVGH) match the 'HIGH' region motif.

This sequence belongs to the class-I aminoacyl-tRNA synthetase family. As to quaternary structure, monomer.

The protein resides in the cytoplasm. It carries out the reaction tRNA(Arg) + L-arginine + ATP = L-arginyl-tRNA(Arg) + AMP + diphosphate. In Aliivibrio fischeri (strain MJ11) (Vibrio fischeri), this protein is Arginine--tRNA ligase.